Here is a 101-residue protein sequence, read N- to C-terminus: Large ribosomal subunit protein bL9m (101 aa).

A mitochondrion-targeting transit peptide spans 1 to 32 (MSIMKPTTRFFRFNSLELAVSPFQRIYGQLRF).

This sequence belongs to the bacterial ribosomal protein bL9 family. Component of the mitochondrial large ribosomal subunit (mt-LSU). Mature yeast 74S mitochondrial ribosomes consist of a small (37S) and a large (54S) subunit. The 37S small subunit contains a 15S ribosomal RNA (15S mt-rRNA) and at least 32 different proteins. The 54S large subunit contains a 21S rRNA (21S mt-rRNA) and at least 45 different proteins.

The protein resides in the mitochondrion. Functionally, component of the mitochondrial ribosome (mitoribosome), a dedicated translation machinery responsible for the synthesis of mitochondrial genome-encoded proteins, including at least some of the essential transmembrane subunits of the mitochondrial respiratory chain. The mitoribosomes are attached to the mitochondrial inner membrane and translation products are cotranslationally integrated into the membrane. The protein is Large ribosomal subunit protein bL9m of Schizosaccharomyces pombe (strain 972 / ATCC 24843) (Fission yeast).